Consider the following 85-residue polypeptide: Large ribosomal subunit protein bL27 (85 aa).

A disordered region spans residues 1–22; sequence MAHKKAGGSTKNGRDSESKRLG.

The protein belongs to the bacterial ribosomal protein bL27 family.

The chain is Large ribosomal subunit protein bL27 from Idiomarina loihiensis (strain ATCC BAA-735 / DSM 15497 / L2-TR).